The following is a 1290-amino-acid chain: 1-phosphatidylinositol 4,5-bisphosphate phosphodiesterase gamma-1 (1290 aa).

Ala2 is subject to N-acetylalanine. The region spanning 27–142 (RSLEVGTVMT…WIKGLTWLME (116 aa)) is the PH 1 domain. The 36-residue stretch at 152 to 187 (QIERWLRKQFYSVDRNREDRISAKDLKNMLSQVNYR) folds into the EF-hand domain. Residues Asp165, Asn167, Glu169, Arg171, and Asp176 each coordinate Ca(2+). The region spanning 320–464 (DTMNNPLSHY…LKRKILIKHK (145 aa)) is the PI-PLC X-box domain. Catalysis depends on residues His335 and His380. The PH 2; first part domain occupies 489–523 (SIKNGILYLEDPVNHEWYPHYFVLTSSKIYYSEET). At Tyr506 the chain carries Phosphotyrosine. The segment at 522-544 (ETSSDQGNEDEEEPKEVSSSTEL) is disordered. SH2 domains are found at residues 550–657 (WFHG…SEPV) and 668–756 (WYHA…RYPI). Tyr771 is subject to Phosphotyrosine; by SYK. Tyr775 is modified (phosphotyrosine). Tyr783 is modified (phosphotyrosine; by ITK, SYK and TXK). One can recognise an SH3 domain in the interval 791–851 (TFKCAVKALF…PSNYVEEMVN (61 aa)). Residues 895 to 931 (FVFSISMASVAHWSLDVAADSQEELQDWVKKIREVAQ) form the PH 2; second part domain. A PI-PLC Y-box domain is found at 953–1070 (LSELVVYCRP…GYVLQPSTMR (118 aa)). Phosphotyrosine is present on Tyr977. The C2 domain occupies 1071-1194 (DEAFDPFDKS…TGYRAVPLKN (124 aa)). 5 positions are modified to phosphoserine: Ser1221, Pro1222, Ser1227, Ser1233, and Ser1248. Tyr1253 carries the phosphotyrosine modification. A Phosphoserine modification is found at Ser1263. Positions 1271–1290 (FDSRERRAPRRTRVNGDNRL) are disordered.

In terms of assembly, interacts with AGAP2 via its SH3 domain. Interacts (via SH2 domain) with RET. Interacts with FLT1 (tyrosine-phosphorylated). Interacts (via SH2 domain) with FGFR1, FGFR2, FGFR3 and FGFR4 (phosphorylated). Interacts with LAT (phosphorylated) upon TCR activation. Interacts (via SH3 domain) with the Pro-rich domain of TNK1. Associates with BLNK, VAV1, GRB2 and NCK1 in a B-cell antigen receptor-dependent fashion. Interacts with CBLB in activated T-cells; which inhibits phosphorylation. Interacts with SHB. Interacts (via SH3 domain) with the Arg/Gly-rich-flanked Pro-rich domains of KHDRBS1/SAM68. This interaction is selectively regulated by arginine methylation of KHDRBS1/SAM68. Interacts with INPP5D/SHIP1, THEMIS and CLNK. Interacts with AXL, FLT4 and KIT. Interacts with RALGPS1. Interacts (via the SH2 domains) with VIL1 (phosphorylated at C-terminus tyrosine phosphorylation sites). Interacts (via SH2 domain) with PDGFRA and PDGFRB (tyrosine phosphorylated). Interacts with PIP5K1C. Interacts with NTRK1 and NTRK2 (phosphorylated upon ligand-binding). Interacts with SYK; activates PLCG1. Interacts with GRB2, LAT and THEMIS upon TCR activation in thymocytes. Interacts with TESPA1; the association is increased with prolonged stimulation of the TCR and may facilitate the assembly of the LAT signalosome. Interacts (via C-terminal proline-rich domain (PRD)) with PLCG1 (via SH3 domain); this interaction leads to guanine nucleotide exchange from PlCG1 to DNM1 and enhances DNM1-dependent endocytosis. (Microbial infection) Interacts (via SH3 domain) with HEV ORF3 protein. Ca(2+) is required as a cofactor. Post-translationally, tyrosine phosphorylated in response to signaling via activated FLT3, KIT and PDGFRA. Tyrosine phosphorylated by activated FGFR1, FGFR2, FGFR3 and FGFR4. Tyrosine phosphorylated by activated FLT1 and KDR. Tyrosine phosphorylated by activated PDGFRB. The receptor-mediated activation of PLCG1 involves its phosphorylation by tyrosine kinases, in response to ligation of a variety of growth factor receptors and immune system receptors. For instance, SYK phosphorylates and activates PLCG1 in response to ligation of the B-cell receptor. May be dephosphorylated by PTPRJ. Phosphorylated by ITK and TXK on Tyr-783 upon TCR activation in T-cells. Ubiquitinated by CBLB in activated T-cells.

It localises to the cell projection. Its subcellular location is the lamellipodium. The protein localises to the ruffle. The enzyme catalyses a 1,2-diacyl-sn-glycero-3-phospho-(1D-myo-inositol-4,5-bisphosphate) + H2O = 1D-myo-inositol 1,4,5-trisphosphate + a 1,2-diacyl-sn-glycerol + H(+). It catalyses the reaction a 1,2-diacyl-sn-glycero-3-phospho-(1D-myo-inositol) + H2O = 1D-myo-inositol 1-phosphate + a 1,2-diacyl-sn-glycerol + H(+). Its activity is regulated as follows. Activated by phosphorylation on tyrosine residues. In terms of biological role, mediates the production of the second messenger molecules diacylglycerol (DAG) and inositol 1,4,5-trisphosphate (IP3). Plays an important role in the regulation of intracellular signaling cascades. Becomes activated in response to ligand-mediated activation of receptor-type tyrosine kinases, such as PDGFRA, PDGFRB, EGFR, FGFR1, FGFR2, FGFR3 and FGFR4. Plays a role in actin reorganization and cell migration. Guanine nucleotide exchange factor that binds the GTPase DNM1 and catalyzes the dissociation of GDP, allowing a GTP molecule to bind in its place, therefore enhancing DNM1-dependent endocytosis. This Homo sapiens (Human) protein is 1-phosphatidylinositol 4,5-bisphosphate phosphodiesterase gamma-1.